Consider the following 95-residue polypeptide: Cell division topological specificity factor (95 aa).

This sequence belongs to the MinE family.

Prevents the cell division inhibition by proteins MinC and MinD at internal division sites while permitting inhibition at polar sites. This ensures cell division at the proper site by restricting the formation of a division septum at the midpoint of the long axis of the cell. This is Cell division topological specificity factor from Psychrobacter cryohalolentis (strain ATCC BAA-1226 / DSM 17306 / VKM B-2378 / K5).